The primary structure comprises 394 residues: Succinate--CoA ligase [ADP-forming] subunit beta (394 aa).

ATP-binding positions include Lys46, 53 to 55 (GRG), Glu99, Cys102, and Glu107. Positions 199 and 213 each coordinate Mg(2+). Substrate-binding positions include Asn264 and 321–323 (GIV).

Belongs to the succinate/malate CoA ligase beta subunit family. In terms of assembly, heterotetramer of two alpha and two beta subunits. Requires Mg(2+) as cofactor.

The enzyme catalyses succinate + ATP + CoA = succinyl-CoA + ADP + phosphate. The catalysed reaction is GTP + succinate + CoA = succinyl-CoA + GDP + phosphate. The protein operates within carbohydrate metabolism; tricarboxylic acid cycle; succinate from succinyl-CoA (ligase route): step 1/1. In terms of biological role, succinyl-CoA synthetase functions in the citric acid cycle (TCA), coupling the hydrolysis of succinyl-CoA to the synthesis of either ATP or GTP and thus represents the only step of substrate-level phosphorylation in the TCA. The beta subunit provides nucleotide specificity of the enzyme and binds the substrate succinate, while the binding sites for coenzyme A and phosphate are found in the alpha subunit. The sequence is that of Succinate--CoA ligase [ADP-forming] subunit beta from Haemophilus influenzae (strain PittGG).